A 290-amino-acid polypeptide reads, in one-letter code: Ribosomal RNA small subunit methyltransferase A (290 aa).

Residues N27, L29, G54, E75, D100, and N125 each contribute to the S-adenosyl-L-methionine site.

It belongs to the class I-like SAM-binding methyltransferase superfamily. rRNA adenine N(6)-methyltransferase family. RsmA subfamily.

It localises to the cytoplasm. The catalysed reaction is adenosine(1518)/adenosine(1519) in 16S rRNA + 4 S-adenosyl-L-methionine = N(6)-dimethyladenosine(1518)/N(6)-dimethyladenosine(1519) in 16S rRNA + 4 S-adenosyl-L-homocysteine + 4 H(+). In terms of biological role, specifically dimethylates two adjacent adenosines (A1518 and A1519) in the loop of a conserved hairpin near the 3'-end of 16S rRNA in the 30S particle. May play a critical role in biogenesis of 30S subunits. The chain is Ribosomal RNA small subunit methyltransferase A from Streptococcus pyogenes serotype M18 (strain MGAS8232).